The following is a 342-amino-acid chain: AM-toxin biosynthesis protein 12 (342 aa).

Residues 1 to 20 (MSLLITSLAWGALLDPEVSS) form the signal peptide.

Its pathway is mycotoxin biosynthesis. Functionally, part of the gene clusters that mediate the biosynthesis of AM-toxins, host-selective toxins (HSTs) causing Alternaria blotch on apple, a worldwide distributed disease. AM-toxins are cyclic depsipeptides containing the 3 residues 2-hydroxy-isovaleric acid (2-HIV), dehydroalanine, L-alanine which are common for all 3 AM-toxins I to III. The fourth precursor is L-alpha-amino-methoxyphenyl-valeric acid (L-Amv) for AM-toxin I, L-alpha-amino-phenyl-valeric acid (L-Apv) for AM-toxin II, and L-alpha-amino-hydroxyphenyl-valeric acid (L-Ahv) for AM-toxin III. AM-toxins have two target sites for affecting susceptible apple cells; they cause invagination of the plasma membrane and electrolyte loss and chloroplast disorganization. The non-ribosomal peptide synthetase AMT1 contains 4 catalytic modules and is responsible for activation of each residue in AM-toxin. The aldo-keto reductase AMT2 catalyzes the conversion of 2-keto-isovaleric acid (2-KIV) to 2-hydroxy-isovaleric acid (2-HIV), one of the precursor residues incorporated by AMT1 during AM-toxin biosynthesis, by reduction of its ketone to an alcohol. The cytochrome P450 monooxygenase AMT3 and the thioesterase AMT4 are also important for AM-toxin production, but their exact function within the AM-toxin biosynthesis are not known yet. Up to 21 proteins (including AMT1 to AMT4) are predicted to be involved in AM-toxin biosynthesis since their expression ishighly up-regulated in AM-toxin-producing cultures. The sequence is that of AM-toxin biosynthesis protein 12 from Alternaria alternata (Alternaria rot fungus).